The sequence spans 468 residues: Ubiquitin carboxyl-terminal hydrolase 17-like protein B (468 aa).

Positions 1-20 (MVVALSFPEADPAMSPPSAP) are disordered. A USP domain is found at 51-348 (CGLQNTGNSC…NAYVLFYVQQ (298 aa)). The active-site Nucleophile is the Cys60. His307 acts as the Proton acceptor in catalysis. Residues 374 to 449 (KKSGEKKHNK…GGQNLRNTEG (76 aa)) are disordered. The segment covering 394-403 (CENREKRSSK) has biased composition (basic and acidic residues). Residues 422–434 (GQKQENTKLTPQE) show a composition bias toward polar residues.

It belongs to the peptidase C19 family. USP17 subfamily. Post-translationally, ubiquitinated. Detected in brain, heart, liver, lung, kidney, ovary and spleen.

The enzyme catalyses Thiol-dependent hydrolysis of ester, thioester, amide, peptide and isopeptide bonds formed by the C-terminal Gly of ubiquitin (a 76-residue protein attached to proteins as an intracellular targeting signal).. Inhibited by ubiquitin aldehyde. Functionally, deubiquitinating enzyme that removes conjugated ubiquitin from specific proteins to regulate different cellular processes. The polypeptide is Ubiquitin carboxyl-terminal hydrolase 17-like protein B (Mus musculus (Mouse)).